The chain runs to 227 residues: Cytochrome c oxidase subunit 2 (227 aa).

Topologically, residues 1–14 (MAYPFQLGLQDATS) are mitochondrial intermembrane. Residues 15-45 (PIMEELTNFHDHTLMIVFLISTLVLYIISLM) traverse the membrane as a helical segment. Residues 46-59 (LTTKLTHTSTMDAQ) are Mitochondrial matrix-facing. Residues 60–87 (EVETIWTILPAVILILIALPSLRILYMM) form a helical membrane-spanning segment. At 88-227 (DEINNPALTV…YFEDWSASMI (140 aa)) the chain is on the mitochondrial intermembrane side. Residues histidine 161, cysteine 196, glutamate 198, cysteine 200, histidine 204, and methionine 207 each contribute to the Cu cation site. Residue glutamate 198 participates in Mg(2+) binding. Tyrosine 218 is modified (phosphotyrosine).

Belongs to the cytochrome c oxidase subunit 2 family. As to quaternary structure, component of the cytochrome c oxidase (complex IV, CIV), a multisubunit enzyme composed of 14 subunits. The complex is composed of a catalytic core of 3 subunits MT-CO1, MT-CO2 and MT-CO3, encoded in the mitochondrial DNA, and 11 supernumerary subunits COX4I, COX5A, COX5B, COX6A, COX6B, COX6C, COX7A, COX7B, COX7C, COX8 and NDUFA4, which are encoded in the nuclear genome. The complex exists as a monomer or a dimer and forms supercomplexes (SCs) in the inner mitochondrial membrane with NADH-ubiquinone oxidoreductase (complex I, CI) and ubiquinol-cytochrome c oxidoreductase (cytochrome b-c1 complex, complex III, CIII), resulting in different assemblies (supercomplex SCI(1)III(2)IV(1) and megacomplex MCI(2)III(2)IV(2)). Found in a complex with TMEM177, COA6, COX18, COX20, SCO1 and SCO2. Interacts with TMEM177 in a COX20-dependent manner. Interacts with COX20. Interacts with COX16. Requires Cu cation as cofactor.

It localises to the mitochondrion inner membrane. It carries out the reaction 4 Fe(II)-[cytochrome c] + O2 + 8 H(+)(in) = 4 Fe(III)-[cytochrome c] + 2 H2O + 4 H(+)(out). In terms of biological role, component of the cytochrome c oxidase, the last enzyme in the mitochondrial electron transport chain which drives oxidative phosphorylation. The respiratory chain contains 3 multisubunit complexes succinate dehydrogenase (complex II, CII), ubiquinol-cytochrome c oxidoreductase (cytochrome b-c1 complex, complex III, CIII) and cytochrome c oxidase (complex IV, CIV), that cooperate to transfer electrons derived from NADH and succinate to molecular oxygen, creating an electrochemical gradient over the inner membrane that drives transmembrane transport and the ATP synthase. Cytochrome c oxidase is the component of the respiratory chain that catalyzes the reduction of oxygen to water. Electrons originating from reduced cytochrome c in the intermembrane space (IMS) are transferred via the dinuclear copper A center (CU(A)) of subunit 2 and heme A of subunit 1 to the active site in subunit 1, a binuclear center (BNC) formed by heme A3 and copper B (CU(B)). The BNC reduces molecular oxygen to 2 water molecules using 4 electrons from cytochrome c in the IMS and 4 protons from the mitochondrial matrix. The polypeptide is Cytochrome c oxidase subunit 2 (MT-CO2) (Hybomys univittatus (Peter's striped mouse)).